The following is a 329-amino-acid chain: Haptoglobin (329 aa).

N-linked (GlcNAc...) asparagine glycosylation occurs at Asn9. Residues 13 to 70 form the Sushi domain; it reads VSLPKPPVIENGYVEHMIRYQCKPFYKLHTEGDGVYTLNSEKHWTNKAVGEKLPECEA. 2 cysteine pairs are disulfide-bonded: Cys34–Cys68 and Cys72–Cys189. Residue Arg84 is a propeptide. One can recognise a Peptidase S1 domain in the interval 85 to 327; it reads IMGGSVDAKG…VLAWVQETIA (243 aa). Asn107 and Asn214 each carry an N-linked (GlcNAc...) asparagine glycan. Cystine bridges form between Cys232–Cys263 and Cys274–Cys304. The segment at 241–246 is interaction with CD163; sequence VPEKKS.

This sequence belongs to the peptidase S1 family. As to quaternary structure, tetramer of two alpha and two beta chains; disulfide-linked. The hemoglobin/haptoglobin complex is composed of a haptoglobin dimer bound to two hemoglobin alpha-beta dimers. Interacts with CD163. Interacts with ERGIC3. In terms of tissue distribution, expressed by the liver and secreted in plasma.

It is found in the secreted. Its subcellular location is the extracellular space. As a result of hemolysis, hemoglobin is found to accumulate in the kidney and is secreted in the urine. Haptoglobin captures, and combines with free plasma hemoglobin to allow hepatic recycling of heme iron and to prevent kidney damage. Haptoglobin also acts as an antioxidant, has antibacterial activity and plays a role in modulating many aspects of the acute phase response. Hemoglobin/haptoglobin complexes are rapidly cleared by the macrophage CD163 scavenger receptor expressed on the surface of liver Kupfer cells through an endocytic lysosomal degradation pathway. The chain is Haptoglobin (HP) from Canis lupus familiaris (Dog).